The chain runs to 644 residues: Exoribonuclease 2 (644 aa).

The RNB domain maps to 189-516 (RQDLTALNFV…NHRLLKAVIK (328 aa)). The region spanning 561-643 (NTRFAAEIID…ETRSIIARPA (83 aa)) is the S1 motif domain.

Belongs to the RNR ribonuclease family. RNase II subfamily.

Its subcellular location is the cytoplasm. It carries out the reaction Exonucleolytic cleavage in the 3'- to 5'-direction to yield nucleoside 5'-phosphates.. Its function is as follows. Involved in mRNA degradation. Hydrolyzes single-stranded polyribonucleotides processively in the 3' to 5' direction. The protein is Exoribonuclease 2 of Salmonella choleraesuis (strain SC-B67).